The following is a 141-amino-acid chain: Nucleoside diphosphate kinase (141 aa).

ATP is bound by residues lysine 11, phenylalanine 59, arginine 87, threonine 93, arginine 104, and asparagine 114. The active-site Pros-phosphohistidine intermediate is the histidine 117.

Belongs to the NDK family. As to quaternary structure, homotetramer. Mg(2+) serves as cofactor.

The protein resides in the cytoplasm. The enzyme catalyses a 2'-deoxyribonucleoside 5'-diphosphate + ATP = a 2'-deoxyribonucleoside 5'-triphosphate + ADP. It catalyses the reaction a ribonucleoside 5'-diphosphate + ATP = a ribonucleoside 5'-triphosphate + ADP. Major role in the synthesis of nucleoside triphosphates other than ATP. The ATP gamma phosphate is transferred to the NDP beta phosphate via a ping-pong mechanism, using a phosphorylated active-site intermediate. In Paraburkholderia phymatum (strain DSM 17167 / CIP 108236 / LMG 21445 / STM815) (Burkholderia phymatum), this protein is Nucleoside diphosphate kinase.